A 436-amino-acid chain; its full sequence is Adenylosuccinate synthetase (436 aa).

GTP contacts are provided by residues 13 to 19 (GDEGKGK) and 41 to 43 (GHT). The Proton acceptor role is filled by D14. 2 residues coordinate Mg(2+): D14 and G41. IMP-binding positions include 14–17 (DEGK), 39–42 (NAGH), T130, R144, Q225, T240, and R304. The Proton donor role is filled by H42. Residue 300-306 (ATTGRSR) participates in substrate binding. Residues R306, 332-334 (KLD), and 415-417 (STG) contribute to the GTP site.

This sequence belongs to the adenylosuccinate synthetase family. In terms of assembly, homodimer. It depends on Mg(2+) as a cofactor.

It is found in the cytoplasm. It catalyses the reaction IMP + L-aspartate + GTP = N(6)-(1,2-dicarboxyethyl)-AMP + GDP + phosphate + 2 H(+). It functions in the pathway purine metabolism; AMP biosynthesis via de novo pathway; AMP from IMP: step 1/2. Its function is as follows. Plays an important role in the de novo pathway of purine nucleotide biosynthesis. Catalyzes the first committed step in the biosynthesis of AMP from IMP. This chain is Adenylosuccinate synthetase, found in Hamiltonella defensa subsp. Acyrthosiphon pisum (strain 5AT).